The primary structure comprises 291 residues: MATATVRPAAQRLRLLLSPLKSRICVPQAEPVATFGTAVTSAKVAVNGVHLHYQRVGEGEHAILLLPGMLGSGKTDFAPQLQSLNKKRFTLVAWDPRGYGYSRPPDRDFPRDFFERDAKDAVDLMKALQFKQVSLLGWSDGGITALIAAAKYPSYIRKMVIWGANAYVTEEDSRIYQGIRDVSKWSEKARKPLEALYGYDYLAKTCEDWVDGISQFKQLPEGNICRHLLPLVQCPTLIVHGEKDPLVPRFHADFLLQHVKGSRLHLMPEGKHNLHLRFADEFNRLVEDFLQ.

A signal peptide spans 1–37 (MATATVRPAAQRLRLLLSPLKSRICVPQAEPVATFGT). Positions 62–173 (AILLLPGMLG…ANAYVTEEDS (112 aa)) constitute an AB hydrolase-1 domain. Position 74 is an N6-acetyllysine; alternate (Lys-74). Lys-74 is modified (N6-succinyllysine; alternate). Residues Lys-86 and Lys-119 each carry the N6-acetyllysine modification. The residue at position 126 (Lys-126) is an N6-acetyllysine; alternate. Lys-126 bears the N6-succinyllysine; alternate mark. Ser-139 functions as the Nucleophile in the catalytic mechanism. At Lys-184 the chain carries N6-succinyllysine. An N6-acetyllysine; alternate modification is found at Lys-191. Lys-191 carries the post-translational modification N6-succinyllysine; alternate. Residue Lys-217 is modified to N6-acetyllysine. Mg(2+) is bound at residue Glu-221. The residue at position 243 (Lys-243) is an N6-acetyllysine. Residue Asp-244 is the Charge relay system of the active site. Residues Lys-260 and Lys-271 each carry the N6-acetyllysine; alternate modification. Lys-260 and Lys-271 each carry N6-succinyllysine; alternate. His-272 serves as the catalytic Charge relay system.

This sequence belongs to the AB hydrolase superfamily. Lipase family. In terms of assembly, monomer. May also form homodimers.

The protein localises to the mitochondrion. It catalyses the reaction L-homocysteine thiolactone + H2O = L-homocysteine + H(+). It carries out the reaction valacyclovir + H2O = acyclovir + L-valine + H(+). In terms of biological role, specific alpha-amino acid ester serine hydrolase that prefers small, hydrophobic, and aromatic side chains and does not have a stringent requirement for the leaving group other than preferring a primary alcohol. Has homocysteine-thiolactonase activity (in vitro) and may play a significant role in the detoxification of homocysteine thiolactone in vivo. Catalyzes the hydrolytic activation of amino acid ester prodrugs of nucleoside analogs such as valacyclovir and valganciclovir, converting them into their active forms (acyclovir and ganciclovir). In Mus musculus (Mouse), this protein is Serine hydrolase BPHL (Bphl).